The chain runs to 364 residues: Probable methyltransferase ICS2 (364 aa).

Positions 18, 61, 98, 99, 133, and 134 each coordinate S-adenosyl-L-homocysteine. Mg(2+) contacts are provided by Asn-172, Asp-258, Phe-260, and Asn-261.

This sequence belongs to the methyltransferase superfamily. Type-7 methyltransferase family. The cofactor is Mg(2+).

In terms of biological role, no detectable N-methyltransferase activity. The chain is Probable methyltransferase ICS2 from Camellia irrawadiensis (Burmese tea).